A 1234-amino-acid chain; its full sequence is 1-phosphatidylinositol 4,5-bisphosphate phosphodiesterase beta-3 (1234 aa).

An N-acetylalanine modification is found at A2. In terms of domain architecture, PI-PLC X-box spans 318–468; sequence DMTQPLSAYF…LMGRILVKNK (151 aa). Catalysis depends on residues H332 and H379. The tract at residues 467 to 587 is disordered; that stretch reads NKKRHRPSAG…GTASSEVNAT (121 aa). Residues S474, S490, S495, and S537 each carry the phosphoserine modification. The segment covering 488–515 has biased composition (low complexity); the sequence is EQSNSALSESSAATEPSSPQLGSPSSDS. The span at 555–567 shows a compositional bias: acidic residues; that stretch reads REDEEEDEEEEEQ. A compositionally biased stretch (polar residues) spans 576 to 587; that stretch reads DEGTASSEVNAT. A PI-PLC Y-box domain is found at 590–706; that stretch reads MSTLVNYIEP…GYLLKPEFMR (117 aa). One can recognise a C2 domain in the interval 707–835; it reads RPDKSFDPFT…RNEANQPLCL (129 aa). Polar residues predominate over residues 887–908; the sequence is AGQETCQDTQSQQLGSQPSSNP. Positions 887 to 937 are disordered; the sequence is AGQETCQDTQSQQLGSQPSSNPTPSPLDASPRRPPGPTTSPASTSLSSPGQ. A compositionally biased stretch (low complexity) spans 925 to 936; the sequence is TSPASTSLSSPG. S926 and S1105 each carry phosphoserine. The disordered stretch occupies residues 1198 to 1234; the sequence is GLGDGPLVACASNGHAPGSSGHLSGADSESQEENTQL. An interaction with SHANK2 region spans residues 1231 to 1234; that stretch reads NTQL.

In terms of assembly, interacts with SHANK2. Interacts with LPAR2. Ca(2+) serves as cofactor.

The protein localises to the cytoplasm. It is found in the membrane. The protein resides in the nucleus. It carries out the reaction a 1,2-diacyl-sn-glycero-3-phospho-(1D-myo-inositol-4,5-bisphosphate) + H2O = 1D-myo-inositol 1,4,5-trisphosphate + a 1,2-diacyl-sn-glycerol + H(+). The catalysed reaction is a 1,2-diacyl-sn-glycero-3-phospho-(1D-myo-inositol) + H2O = 1D-myo-inositol 1-phosphate + a 1,2-diacyl-sn-glycerol + H(+). With respect to regulation, activated by G(q)/G(11) G alpha proteins in response to ligand-binding to G protein-coupled receptors. In terms of biological role, catalyzes the production of the second messenger molecules diacylglycerol (DAG) and inositol 1,4,5-trisphosphate (IP3). Key transducer of G protein-coupled receptor signaling: activated by G(q)/G(11) G alpha proteins downstream of G protein-coupled receptors activation. In neutrophils, participates in a phospholipase C-activating N-formyl peptide-activated GPCR (G protein-coupled receptor) signaling pathway by promoting RASGRP4 activation by DAG, to promote neutrophil functional responses. The chain is 1-phosphatidylinositol 4,5-bisphosphate phosphodiesterase beta-3 from Homo sapiens (Human).